A 352-amino-acid polypeptide reads, in one-letter code: N-acetyl-gamma-glutamyl-phosphate reductase (352 aa).

Cysteine 155 is an active-site residue.

Belongs to the NAGSA dehydrogenase family. Type 1 subfamily.

It is found in the cytoplasm. It catalyses the reaction N-acetyl-L-glutamate 5-semialdehyde + phosphate + NADP(+) = N-acetyl-L-glutamyl 5-phosphate + NADPH + H(+). The protein operates within amino-acid biosynthesis; L-arginine biosynthesis; N(2)-acetyl-L-ornithine from L-glutamate: step 3/4. Its function is as follows. Catalyzes the NADPH-dependent reduction of N-acetyl-5-glutamyl phosphate to yield N-acetyl-L-glutamate 5-semialdehyde. The polypeptide is N-acetyl-gamma-glutamyl-phosphate reductase (Synechococcus elongatus (strain ATCC 33912 / PCC 7942 / FACHB-805) (Anacystis nidulans R2)).